The chain runs to 360 residues: Cyclin-dependent kinase 10 (360 aa).

In terms of domain architecture, Protein kinase spans 39–323 (FEKLNRIGEG…AGDCLESSYF (285 aa)). ATP is bound by residues 45 to 53 (IGEGTYGIV) and Lys-68. Asp-163 serves as the catalytic Proton acceptor. Position 196 is a phosphothreonine (Thr-196). Residues 334–360 (LMPTFPHHRNKRAAPATSEGQSKRCKP) are disordered.

Belongs to the protein kinase superfamily. CMGC Ser/Thr protein kinase family. CDC2/CDKX subfamily. In terms of assembly, heterodimer with CCNQ, the interaction is required for kinase activity. Interacts with ETS2. Interacts with PRK2.

The protein localises to the cytoplasm. Its subcellular location is the cytoskeleton. It localises to the cilium basal body. It catalyses the reaction L-seryl-[protein] + ATP = O-phospho-L-seryl-[protein] + ADP + H(+). The enzyme catalyses L-threonyl-[protein] + ATP = O-phospho-L-threonyl-[protein] + ADP + H(+). Functionally, cyclin-dependent kinase that phosphorylates the transcription factor ETS2 (in vitro) and positively controls its proteasomal degradation (in cells). Involved in the regulation of actin cytoskeleton organization through the phosphorylation of actin dynamics regulators such as PKN2. Is a negative regulator of ciliogenesis through phosphorylation of PKN2 and promotion of RhoA signaling. The sequence is that of Cyclin-dependent kinase 10 (CDK10) from Homo sapiens (Human).